Reading from the N-terminus, the 129-residue chain is Small ribosomal subunit protein uS11 (129 aa).

It belongs to the universal ribosomal protein uS11 family. In terms of assembly, part of the 30S ribosomal subunit. Interacts with proteins S7 and S18. Binds to IF-3.

In terms of biological role, located on the platform of the 30S subunit, it bridges several disparate RNA helices of the 16S rRNA. Forms part of the Shine-Dalgarno cleft in the 70S ribosome. This chain is Small ribosomal subunit protein uS11, found in Lacticaseibacillus casei (strain BL23) (Lactobacillus casei).